The chain runs to 635 residues: MHLSEIVHPNQLHGLSISELKQIANQIREKHLDTVATSGGHLGPGLGVVELTLALYQTLDLDQDKVVWDVGHQAYPHKLITGRYERFHTLRQKDGVAGYLNRRESKFDHFGAGHASTSISSVLGMALARDAKGENFKTVAVIGDGAMTGGMALEAINHAGHLPHTRMLVILNDNDMSISPNVGAMSRYLNKMRLSPPIQFLSDNFEEQLKQLPFGEQVAPDLKRLKGGMKRLAVSKVGAVFEELGFTYIGPVDGHSLEELLATFKEAHLHEGPVLVHVATTKGKGYAIAEQDQVSYHAQSPFNLETGKAKPSNKPKPPSYSKVFAETLIKMAENDIRVVGITAAMATGTGLDKLQAKLPKQYIDVGIAEQHAVTLAAGMACEGMRPVVAIYSTFLQRGYDQIIHDVCIQNLPVFFCLDRAGIVGADGPTHQGMYDIAYLRCLPNMVMMAPKDEAELQQMLVTGINYTDGPIAMRYPRGSGLGVGLMEEGWEPLPIGKAETLRHGDDVLLLAYGTMVNLASQVADMLTEHGVRATVVNARFAKPLDTELIIPLAQKIGQVVTLEEGCLPGGFGSAVLEALMDHQVMAPVTRIGVPDQLVEHATPDQSKAELGLTPAQVAERVLGLLKQKPAPSYVS.

Residues H72 and 113-115 contribute to the thiamine diphosphate site; that span reads GHA. D144 lines the Mg(2+) pocket. Thiamine diphosphate is bound by residues 145-146, N174, Y286, and E369; that span reads GA. A Mg(2+)-binding site is contributed by N174.

It belongs to the transketolase family. DXPS subfamily. In terms of assembly, homodimer. Mg(2+) is required as a cofactor. It depends on thiamine diphosphate as a cofactor.

It catalyses the reaction D-glyceraldehyde 3-phosphate + pyruvate + H(+) = 1-deoxy-D-xylulose 5-phosphate + CO2. The protein operates within metabolic intermediate biosynthesis; 1-deoxy-D-xylulose 5-phosphate biosynthesis; 1-deoxy-D-xylulose 5-phosphate from D-glyceraldehyde 3-phosphate and pyruvate: step 1/1. Its function is as follows. Catalyzes the acyloin condensation reaction between C atoms 2 and 3 of pyruvate and glyceraldehyde 3-phosphate to yield 1-deoxy-D-xylulose-5-phosphate (DXP). In Acaryochloris marina (strain MBIC 11017), this protein is 1-deoxy-D-xylulose-5-phosphate synthase.